The sequence spans 345 residues: NADPH dehydrogenase (345 aa).

An FMN-binding site is contributed by 23 to 26 (SPMC). Position 28 (Tyr-28) interacts with substrate. The FMN site is built by Ala-60 and Gln-102. Substrate is bound at residue 164–167 (HGAH). Residues Arg-215 and 307–308 (GR) contribute to the FMN site.

This sequence belongs to the NADH:flavin oxidoreductase/NADH oxidase family. NamA subfamily. As to quaternary structure, homotetramer. It depends on FMN as a cofactor.

The enzyme catalyses A + NADPH + H(+) = AH2 + NADP(+). In terms of biological role, catalyzes the reduction of the double bond of an array of alpha,beta-unsaturated aldehydes and ketones. It also reduces the nitro group of nitroester and nitroaromatic compounds. It could have a role in detoxification processes. In Bacillus cereus (strain AH820), this protein is NADPH dehydrogenase.